A 412-amino-acid polypeptide reads, in one-letter code: Multidrug resistance protein MdtG (412 aa).

Transmembrane regions (helical) follow at residues 20–40, 62–82, 96–116, 119–139, 150–170, 177–197, 225–245, 260–280, 294–314, and 382–402; these read LFVA…IMPF, LVFS…GGLA, LGMS…QFLI, ALLG…ATQI, TLST…GLLA, PVFF…LYFI, VLCL…IAPI, LAFI…MSAP, ILVA…LVQT, and TVFF…YWCL.

The protein belongs to the major facilitator superfamily. DHA1 family. MdtG (TC 2.A.1.2.20) subfamily.

It is found in the cell inner membrane. In Rahnella sp. (strain Y9602), this protein is Multidrug resistance protein MdtG.